A 472-amino-acid polypeptide reads, in one-letter code: Transcriptional activator protein rec16 (472 aa).

The segment at 420–444 (FICCYCTKPFLSISKLQEHESSCSH) adopts a C2H2-type zinc-finger fold.

The protein localises to the nucleus. Its function is as follows. Transcriptional activator that controls the onset of premeiotic DNA synthesis by regulating res2 and some other factor(s) in a mei2 independent cascade. The sequence is that of Transcriptional activator protein rec16 (rec16) from Schizosaccharomyces pombe (strain 972 / ATCC 24843) (Fission yeast).